Consider the following 479-residue polypeptide: MNFETIIGLEVHVELNTNSKIFSPSSAHFGEDPNANTNVIDWSFPGVLPVMNKGVIDAGIKAALALNMDIHKEMHFDRKNYFYPDNPKAYQISQFDEPIGYNGWIDIKLEDGSTKKIRIERAHLEEDAGKNTHGTDGYSYVDLNRQGVPLIEIVSEADMRSPEEAYAYLTALKEIIQYTGISDVKMEEGSMRVDANISLRPYGQEQFGTKTELKNLNSFSNVRKGLEFEVERQAKLLRSGGVIRQETRRYDEANKGTILMRVKEGAADYRYFPEPDLPLYEIDDAWIDEMRAQLPQFPAQRRAKYEEELGLSAYDASQLTATKVLSDFFETAVSLGGDAKQVSNWLQGEVAQFLNAEGKTIEEIALTPENLVEMIAIIADGTISSKMAKKVFVHLAKNGGSARAYVEKAGLVQISDPAVLVPIIHQVFADNEAAVADFKSGKRNADKAFTGFLMKATKGQANPQVAQQLLAQELQKLRD.

It belongs to the GatB/GatE family. GatB subfamily. As to quaternary structure, heterotrimer of A, B and C subunits.

The catalysed reaction is L-glutamyl-tRNA(Gln) + L-glutamine + ATP + H2O = L-glutaminyl-tRNA(Gln) + L-glutamate + ADP + phosphate + H(+). The enzyme catalyses L-aspartyl-tRNA(Asn) + L-glutamine + ATP + H2O = L-asparaginyl-tRNA(Asn) + L-glutamate + ADP + phosphate + 2 H(+). Functionally, allows the formation of correctly charged Asn-tRNA(Asn) or Gln-tRNA(Gln) through the transamidation of misacylated Asp-tRNA(Asn) or Glu-tRNA(Gln) in organisms which lack either or both of asparaginyl-tRNA or glutaminyl-tRNA synthetases. The reaction takes place in the presence of glutamine and ATP through an activated phospho-Asp-tRNA(Asn) or phospho-Glu-tRNA(Gln). The protein is Aspartyl/glutamyl-tRNA(Asn/Gln) amidotransferase subunit B of Streptococcus pyogenes serotype M1.